The primary structure comprises 373 residues: MEFKLKHKDGMARVCEITTAHSTFLTPVFMPVGTVGAVKSLDANDMKNELDAKIILANTYHMYLRPTSKVVKDFGGLHGFTKFDRSFLTDSGGFQAFSLSKNSKHFNEGIEFKSHIDGSRHLFTPKSVLDTQYDFHSDIMMILDDLVALPATKERVKISVDRTILWAKEAITYHKSMQNKGIGIGQNIFGIIQGGTDYEERKRCALSLNEMPFDGLAIGGLSVGEENALMYETVQNLNPYLDENRPRYLMGVGTPEDLVENVERGVDMFDCVMPTRNARNGTFFTSFGKFNIKKAEFINDHEAIGPACSCYTCRNFSRGYLNHLFKAKELTFFRLASLHNLHYYLELAREMREAILNNSFTQFKKNFYHLRGK.

Asp-90 serves as the catalytic Proton acceptor. Residues 90–94, Asp-144, Gln-193, and Gly-220 contribute to the substrate site; that span reads DSGGF. The RNA binding stretch occupies residues 251–257; that stretch reads GVGTPED. Asp-270 (nucleophile) is an active-site residue. An RNA binding; important for wobble base 34 recognition region spans residues 275-279; sequence TRNAR. The Zn(2+) site is built by Cys-308, Cys-310, Cys-313, and His-339.

Belongs to the queuine tRNA-ribosyltransferase family. In terms of assembly, homodimer. Within each dimer, one monomer is responsible for RNA recognition and catalysis, while the other monomer binds to the replacement base PreQ1. Zn(2+) serves as cofactor.

The catalysed reaction is 7-aminomethyl-7-carbaguanine + guanosine(34) in tRNA = 7-aminomethyl-7-carbaguanosine(34) in tRNA + guanine. Its pathway is tRNA modification; tRNA-queuosine biosynthesis. Functionally, catalyzes the base-exchange of a guanine (G) residue with the queuine precursor 7-aminomethyl-7-deazaguanine (PreQ1) at position 34 (anticodon wobble position) in tRNAs with GU(N) anticodons (tRNA-Asp, -Asn, -His and -Tyr). Catalysis occurs through a double-displacement mechanism. The nucleophile active site attacks the C1' of nucleotide 34 to detach the guanine base from the RNA, forming a covalent enzyme-RNA intermediate. The proton acceptor active site deprotonates the incoming PreQ1, allowing a nucleophilic attack on the C1' of the ribose to form the product. After dissociation, two additional enzymatic reactions on the tRNA convert PreQ1 to queuine (Q), resulting in the hypermodified nucleoside queuosine (7-(((4,5-cis-dihydroxy-2-cyclopenten-1-yl)amino)methyl)-7-deazaguanosine). This is Queuine tRNA-ribosyltransferase from Campylobacter jejuni subsp. doylei (strain ATCC BAA-1458 / RM4099 / 269.97).